We begin with the raw amino-acid sequence, 257 residues long: Acyl-[acyl-carrier-protein]--UDP-N-acetylglucosamine O-acyltransferase (257 aa).

It belongs to the transferase hexapeptide repeat family. LpxA subfamily. As to quaternary structure, homotrimer.

The protein resides in the cytoplasm. The enzyme catalyses a (3R)-hydroxyacyl-[ACP] + UDP-N-acetyl-alpha-D-glucosamine = a UDP-3-O-[(3R)-3-hydroxyacyl]-N-acetyl-alpha-D-glucosamine + holo-[ACP]. It functions in the pathway glycolipid biosynthesis; lipid IV(A) biosynthesis; lipid IV(A) from (3R)-3-hydroxytetradecanoyl-[acyl-carrier-protein] and UDP-N-acetyl-alpha-D-glucosamine: step 1/6. Functionally, involved in the biosynthesis of lipid A, a phosphorylated glycolipid that anchors the lipopolysaccharide to the outer membrane of the cell. This Anaeromyxobacter sp. (strain K) protein is Acyl-[acyl-carrier-protein]--UDP-N-acetylglucosamine O-acyltransferase.